The primary structure comprises 229 residues: Coiled-coil domain-containing protein 134 (229 aa).

Positions methionine 1–glycine 22 are cleaved as a signal peptide. A short sequence motif (prevents secretion from ER) is located at residue asparagine 148. Asparagine 148 carries N-linked (GlcNAc...) asparagine glycosylation. Residues threonine 193 to leucine 229 are disordered. Residues phenylalanine 196 to lysine 218 adopt a coiled-coil conformation. The Nuclear localization signal motif lies at arginine 206–arginine 213.

It belongs to the CCDC134 family. In terms of assembly, interacts with TADA2A. Associates with the PCAF complex via TADA2A binding. In terms of processing, O-glycosylated, with additional sialic acid modifications. Expressed in cervical gland, cervical squamous epithelium, endometrium, stomach, kidney distal convoluted tubule, spermatogenic cells in testis, mammary gland, liver and striated muscle (at protein level). Also detected in placenta. Highest expression in testis relative to other tissues. Detected in T cells and dendritic cells; highly expressed in activated CD8(+) T cells, and also expressed at lower levels in CD4(+) T cells.

Its subcellular location is the endoplasmic reticulum lumen. The protein localises to the secreted. It localises to the cytoplasm. It is found in the nucleus. Functionally, molecular adapter required to prevent protein hyperglycosylation of HSP90B1: during translation, associates with nascent HSP90B1 and the STT3A catalytic component of the OST-A complex and tethers them to a specialized translocon that forms a microenvironment for HSP90B1 folding. In the CCDC134-containing translocon, STT3A associates with the SRT pseudosubstrate motif of HSP90B1, preventing access to facultative glycosylation sites until folding is completed, preventing hyperglycosylation and subsequent degradation of HSP90B1. In extracellular secreted form, promotes proliferation and activation of CD8(+) T-cells, suggesting a cytokine-like function. May inhibit ERK and JNK signaling activity. May suppress cell migration and invasion activity, via its effects on ERK and JNK signaling. May also localize in the nucleus: enhances stability of the PCAF histone acetyltransferase (HAT) complex member TADA2A and thus promotes PCAF-mediated histone acetyltransferase activity. Has a critical role in the regulation of osteogenesis and bone development. This is Coiled-coil domain-containing protein 134 from Homo sapiens (Human).